Here is a 452-residue protein sequence, read N- to C-terminus: Probable cytosolic iron-sulfur protein assembly protein 1 (452 aa).

A compositionally biased stretch (pro residues) spans 1 to 12 (MPPPTTPTPNPS). A disordered region spans residues 1-24 (MPPPTTPTPNPSIPQKATLTPLPP). WD repeat units lie at residues 70-121 (GHAR…DAAA), 161-200 (GHEN…QGGD), 213-267 (EHDG…EWVC), 273-319 (GHGG…FGGV), 340-379 (VHTR…EDVA), and 411-452 (YEVN…VRIS).

This sequence belongs to the WD repeat CIA1 family.

Functionally, essential component of the cytosolic iron-sulfur (Fe/S) protein assembly machinery. Required for the maturation of extramitochondrial Fe/S proteins. This chain is Probable cytosolic iron-sulfur protein assembly protein 1, found in Chaetomium globosum (strain ATCC 6205 / CBS 148.51 / DSM 1962 / NBRC 6347 / NRRL 1970) (Soil fungus).